A 973-amino-acid polypeptide reads, in one-letter code: Microtubule-associated protein 1S (973 aa).

Positions 1 to 716 (MAAVMAAPEA…SESLPTLSDS (716 aa)) are necessary for the microtubule-organizing center localization. 2 disordered regions span residues 452-538 (HDLE…GPRA) and 560-853 (LESE…SGRP). The segment covering 459–468 (RANSQDSLAS) has biased composition (polar residues). Ser-462 bears the Phosphoserine mark. The segment covering 490–506 (VRREPALATRDQKKDTR) has biased composition (basic and acidic residues). The span at 565–582 (PPAPSPTLSPAQSPPPTA) shows a compositional bias: pro residues. Phosphoserine occurs at positions 586, 591, and 593. A necessary for interaction with RASSF1 region spans residues 601–973 (PDASPSATTP…EAFPACKVEF (373 aa)). The segment covering 603 to 621 (ASPSATTPTLTTPSLPAEL) has biased composition (low complexity). Positions 645 to 880 (DPGLSLPLRL…GGGAGHLDQN (236 aa)) are necessary for association with microtubules. A phosphoserine mark is found at Ser-660 and Ser-684. Residues 703-722 (PTSVSESLPTLSDSDPVPVA) are compositionally biased toward low complexity. Residue Ser-724 is modified to Phosphoserine. Positions 736 to 749 (DPPPTPRVPPPLPD) are enriched in pro residues. Residues 782–801 (ARPSSASATPRAATVAAKTK) show a composition bias toward low complexity. Residues 875–973 (GHLDQNFFLR…EAFPACKVEF (99 aa)) form a necessary for association with actin region. The necessary for the mitochondrial aggregation and genome destruction stretch occupies residues 881–905 (FFLRVRALCYVISGQGQRQEEGLRA).

Belongs to the MAP1 family. In terms of assembly, heterodimer of a heavy and a light chain. Interacts with microtubules and actin. Both MAP1S heavy and light chains interact with microtubules. MAP1S light chain interacts with actin. Interacts with ESR1, LRPPRC, RASSF1, microtubules and VCY2. Interacts with WDR47 (via N-terminus of light chain). Interacts (via C-terminus) with GAN (via Kelch domains). In terms of tissue distribution, expressed in ventral and dorsal horns of the spinal cord, hippocampus, cerebral cortex, molecular, Purkinje and granular cell layers of the cerebellum and in dorsal root ganglia of the PNS (at protein level). Expressed in brain, testis, heart, lung, kidney and liver.

It is found in the nucleus. Its subcellular location is the cytoplasm. The protein resides in the cytosol. It localises to the cytoskeleton. The protein localises to the spindle. In terms of biological role, microtubule-associated protein that mediates aggregation of mitochondria resulting in cell death and genomic destruction (MAGD). Plays a role in anchoring the microtubule organizing center to the centrosomes. Binds to DNA. Plays a role in apoptosis. Involved in the formation of microtubule bundles. The protein is Microtubule-associated protein 1S (Map1s) of Mus musculus (Mouse).